The sequence spans 160 residues: SsrA-binding protein (160 aa).

Belongs to the SmpB family.

It is found in the cytoplasm. Functionally, required for rescue of stalled ribosomes mediated by trans-translation. Binds to transfer-messenger RNA (tmRNA), required for stable association of tmRNA with ribosomes. tmRNA and SmpB together mimic tRNA shape, replacing the anticodon stem-loop with SmpB. tmRNA is encoded by the ssrA gene; the 2 termini fold to resemble tRNA(Ala) and it encodes a 'tag peptide', a short internal open reading frame. During trans-translation Ala-aminoacylated tmRNA acts like a tRNA, entering the A-site of stalled ribosomes, displacing the stalled mRNA. The ribosome then switches to translate the ORF on the tmRNA; the nascent peptide is terminated with the 'tag peptide' encoded by the tmRNA and targeted for degradation. The ribosome is freed to recommence translation, which seems to be the essential function of trans-translation. The chain is SsrA-binding protein from Nocardia farcinica (strain IFM 10152).